A 148-amino-acid chain; its full sequence is Single-stranded DNA-binding protein 2 (148 aa).

An SSB domain is found at 4-109 (INSVIIAGNL…IKARRIQFLN (106 aa)).

Homotetramer.

This Chlorobaculum tepidum (strain ATCC 49652 / DSM 12025 / NBRC 103806 / TLS) (Chlorobium tepidum) protein is Single-stranded DNA-binding protein 2 (ssb2).